The sequence spans 147 residues: Ubiquitin-conjugating enzyme E2 2 (147 aa).

Positions 1–147 (MALKRIQKEL…AREWTQKYAM (147 aa)) constitute a UBC core domain. Cys85 acts as the Glycyl thioester intermediate in catalysis.

The protein belongs to the ubiquitin-conjugating enzyme family. Interacts with the brc-1-brd-1 heterodimer following ionizing irradiation. In terms of tissue distribution, expressed in the nervous system.

Its subcellular location is the nucleus. It is found in the chromosome. The protein resides in the cytoplasm. It catalyses the reaction S-ubiquitinyl-[E1 ubiquitin-activating enzyme]-L-cysteine + [E2 ubiquitin-conjugating enzyme]-L-cysteine = [E1 ubiquitin-activating enzyme]-L-cysteine + S-ubiquitinyl-[E2 ubiquitin-conjugating enzyme]-L-cysteine.. It functions in the pathway protein modification; protein ubiquitination. Functionally, catalyzes the covalent attachment of ubiquitin to other proteins. Mediates the selective degradation of short-lived and abnormal proteins. Plays a role in the DNA damage response. In particular, in response to ionizing radiation, associates with the E3 ubiquitin-protein ligase brc-1-brd-1 heterodimer on chromatin to activate E3-ubiquitin ligase activity of the heterodimer, and thus its DNA damage repair mechanisms. Required, cell autonomously, for death of the linker cell, a male-specific cell which guides the elongation of the gonad; perhaps acting as part of the ubiquitin proteasome system (UPS) and modulated by heat shock transcription factor hsf-1. The chain is Ubiquitin-conjugating enzyme E2 2 from Caenorhabditis elegans.